The chain runs to 427 residues: 3-phosphoshikimate 1-carboxyvinyltransferase (427 aa).

Residues Lys22, Ser23, and Arg27 each coordinate 3-phosphoshikimate. Lys22 provides a ligand contact to phosphoenolpyruvate. Gly96 and Arg124 together coordinate phosphoenolpyruvate. Positions 169, 170, 171, 197, 313, 336, and 340 each coordinate 3-phosphoshikimate. Gln171 contributes to the phosphoenolpyruvate binding site. Asp313 acts as the Proton acceptor in catalysis. Arg344, Arg386, and Lys411 together coordinate phosphoenolpyruvate.

It belongs to the EPSP synthase family. Monomer.

The protein resides in the cytoplasm. It carries out the reaction 3-phosphoshikimate + phosphoenolpyruvate = 5-O-(1-carboxyvinyl)-3-phosphoshikimate + phosphate. It participates in metabolic intermediate biosynthesis; chorismate biosynthesis; chorismate from D-erythrose 4-phosphate and phosphoenolpyruvate: step 6/7. Catalyzes the transfer of the enolpyruvyl moiety of phosphoenolpyruvate (PEP) to the 5-hydroxyl of shikimate-3-phosphate (S3P) to produce enolpyruvyl shikimate-3-phosphate and inorganic phosphate. The protein is 3-phosphoshikimate 1-carboxyvinyltransferase of Shigella flexneri serotype 5b (strain 8401).